Consider the following 344-residue polypeptide: Phosphoribosylformylglycinamidine cyclo-ligase (344 aa).

It belongs to the AIR synthase family.

The protein resides in the cytoplasm. It catalyses the reaction 2-formamido-N(1)-(5-O-phospho-beta-D-ribosyl)acetamidine + ATP = 5-amino-1-(5-phospho-beta-D-ribosyl)imidazole + ADP + phosphate + H(+). It participates in purine metabolism; IMP biosynthesis via de novo pathway; 5-amino-1-(5-phospho-D-ribosyl)imidazole from N(2)-formyl-N(1)-(5-phospho-D-ribosyl)glycinamide: step 2/2. The sequence is that of Phosphoribosylformylglycinamidine cyclo-ligase from Neisseria meningitidis serogroup C (strain 053442).